Consider the following 338-residue polypeptide: CRISPR system Cmr subunit Cmr1-1 (338 aa).

Belongs to the CRISPR system Cmr1 family. As to quaternary structure, part of the type III-B Cmr ribonucleoprotein (RNP) complex, an elongated RNP with Cmr2 and Cmr3 as the base, with Cmr4 and Cmr5 forming a helical core along the mature crRNA (39 or 45 nt in length), while the complex is capped by Cmr6 and Cmr1. The 5' end of the crRNA is bound to Cmr2 and Cmr3, while Cmr6 and a Cmr1 subunit (Cmr1-1 or Cmr1-2) cap the 3' end of the crRNA. The target RNA lies antiparallel to the crRNA, with its 5' end near Cmr1 and Cmr6 and its 3' end near Cmr2 and Cmr3; major target cleavage occurs nears the junction of Cmr1/Cmr6 and Cmr4/Cmr, with minor cleavage occurring at 6 nt intervals which coincide with the proposed spacing of Cmr4 subunits.

The protein resides in the cytoplasm. Its function is as follows. CRISPR (clustered regularly interspaced short palindromic repeat), is an adaptive immune system that provides protection against mobile genetic elements (viruses, transposable elements and conjugative plasmids). CRISPR clusters contain sequences complementary to antecedent mobile elements and target invading nucleic acids. CRISPR clusters are transcribed and processed into CRISPR RNA (crRNA), formerly called psiRNA (prokaryotic silencing) in this organism. Part of the Cmr ribonucleoprotein complex which has divalent cation-dependent endoribonuclease activity specific for ssRNA complementary to the crRNA (target RNA), generating 5' hydroxy- and 3' phosphate or 2'-3' cyclic phosphate termini. Cmr4 is probably the subunit that cleaves target RNA. Cmr complex does not cleave ssDNA complementary to the crRNA. Cleavage of invading RNA is guided by the crRNA; substrate cleavage occurs a fixed distance (14 nt) from the 3' end of the crRNA. In vitro reconstitution shows Cmr1-2 and Cmr5 are not absolutely necessary for target cleavage. The chain is CRISPR system Cmr subunit Cmr1-1 from Pyrococcus furiosus (strain ATCC 43587 / DSM 3638 / JCM 8422 / Vc1).